The sequence spans 313 residues: D-alanine--D-alanine ligase (313 aa).

The ATP-grasp domain maps to 108–308 (KLVWQQTGVP…YSELVVKVLS (201 aa)). 138 to 193 (VAKLGLPLFVKPASEGSSVAVLKVKTADALPAALAEAATHDKIVIVEKSIEGGGEY) lines the ATP pocket. Mg(2+) contacts are provided by Asp-262, Glu-275, and Asn-277.

The protein belongs to the D-alanine--D-alanine ligase family. Mg(2+) is required as a cofactor. Mn(2+) serves as cofactor.

The protein resides in the cytoplasm. It carries out the reaction 2 D-alanine + ATP = D-alanyl-D-alanine + ADP + phosphate + H(+). The protein operates within cell wall biogenesis; peptidoglycan biosynthesis. Functionally, cell wall formation. This is D-alanine--D-alanine ligase from Burkholderia cenocepacia (strain HI2424).